Consider the following 218-residue polypeptide: DNA endonuclease I-ChuI (218 aa).

Belongs to the LAGLIDADG endonuclease family.

Its subcellular location is the plastid. It localises to the chloroplast. Its function is as follows. Probable endonuclease involved in intron homing. Encoded in the group-I intron of the subunit rRNA-encoding gene (rrnL), it generates a staggered cut with 4-nt (CTCG) 3'-OH overhangs 2 bp downstream from the intron insertion site. The chain is DNA endonuclease I-ChuI from Chlamydomonas applanata (Chlamydomonas humicola).